Here is a 112-residue protein sequence, read N- to C-terminus: Large ribosomal subunit protein uL24 (112 aa).

The protein belongs to the universal ribosomal protein uL24 family. As to quaternary structure, part of the 50S ribosomal subunit.

Its function is as follows. One of two assembly initiator proteins, it binds directly to the 5'-end of the 23S rRNA, where it nucleates assembly of the 50S subunit. Functionally, one of the proteins that surrounds the polypeptide exit tunnel on the outside of the subunit. This Desulfitobacterium hafniense (strain Y51) protein is Large ribosomal subunit protein uL24.